The following is a 213-amino-acid chain: 24 kDa ookinete surface protein (213 aa).

Residues 1-28 form the signal peptide; the sequence is MNFKYSFIFLFFIQLAIRYNNAKITVDT. Positions 30–59 constitute an EGF-like 1; truncated domain; sequence CKGGKLIQMSNHYECKCPSGYALKTENTCE. EGF-like domains follow at residues 60–108 and 108–148; these read PIVK…NICK and KPTR…GKCT. 6 disulfide bridges follow: C64/C80, C74/C94, C96/C107, C112/C122, C117/C134, and C136/C147. An EGF-like 4; truncated domain is found at 151–175; that stretch reads GETKCLLKCKAAEECKLTGKHYECV. Residue N190 is the site of GPI-anchor amidated asparagine attachment. N190 carries an N-linked (GlcNAc...) asparagine glycan. A propeptide spans 191 to 213 (removed in mature form); that stretch reads SSFMNGMSIISIIALLVIYVIVM.

The protein resides in the cell membrane. In Plasmodium berghei (strain Anka), this protein is 24 kDa ookinete surface protein.